Here is a 424-residue protein sequence, read N- to C-terminus: MEKQCCSHPVICSLSTMYTFLLGAIFIALSSSRILLVKYSANEENKYDYLPTTVNVCSELVKLVFCVLVSFCVIKKDHQSRNLKYASWKEFSDFMKWSIPAFLYFLDNLIVFYVLSYLQPAMAVIFSNFSIITTALLFRIVLKRRLNWIQWASLLTLFLSIVALTAGTKTLQHNLAGRGFHHDAFFSPSNSCLLFRSECPRKDNCTAKEWTFPEAKWNTTARVFSHIRLGMGHVLIIVQCFISSMANIYNEKILKEGNQLTESIFIQNSKLYFFGILFNGLTLGLQRSNRDQIKNCGFFYGHSAFSVALIFVTAFQGLSVAFILKFLDNMFHVLMAQVTTVIITTVSVLVFDFRPSLEFFLEAPSVLLSIFIYNASKPQVPEYAPRQERIRDLSGNLWERSSGDGEELERLTKPKSDESDEDTF.

At 1–8 (MEKQCCSH) the chain is on the cytoplasmic side. The chain crosses the membrane as a helical span at residues 9–29 (PVICSLSTMYTFLLGAIFIAL). Residues 30–53 (SSSRILLVKYSANEENKYDYLPTT) are Lumenal-facing. The helical transmembrane segment at 54–74 (VNVCSELVKLVFCVLVSFCVI) threads the bilayer. The Cytoplasmic portion of the chain corresponds to 75–93 (KKDHQSRNLKYASWKEFSD). Residues 94-116 (FMKWSIPAFLYFLDNLIVFYVLS) traverse the membrane as a helical segment. The Lumenal portion of the chain corresponds to 117–119 (YLQ). Residues 120–142 (PAMAVIFSNFSIITTALLFRIVL) form a helical membrane-spanning segment. The Cytoplasmic portion of the chain corresponds to 143–147 (KRRLN). The helical transmembrane segment at 148–168 (WIQWASLLTLFLSIVALTAGT) threads the bilayer. The Lumenal portion of the chain corresponds to 169 to 228 (KTLQHNLAGRGFHHDAFFSPSNSCLLFRSECPRKDNCTAKEWTFPEAKWNTTARVFSHIR). The N-linked (GlcNAc...) asparagine glycan is linked to asparagine 204. Residues 229–249 (LGMGHVLIIVQCFISSMANIY) traverse the membrane as a helical segment. The Cytoplasmic portion of the chain corresponds to 250–263 (NEKILKEGNQLTES). The chain crosses the membrane as a helical span at residues 264 to 284 (IFIQNSKLYFFGILFNGLTLG). At 285–303 (LQRSNRDQIKNCGFFYGHS) the chain is on the lumenal side. Residues 304 to 324 (AFSVALIFVTAFQGLSVAFIL) traverse the membrane as a helical segment. Residues 325 to 330 (KFLDNM) are Cytoplasmic-facing. Residues 331–351 (FHVLMAQVTTVIITTVSVLVF) traverse the membrane as a helical segment. Topologically, residues 352 to 354 (DFR) are lumenal. The chain crosses the membrane as a helical span at residues 355–375 (PSLEFFLEAPSVLLSIFIYNA). At 376-424 (SKPQVPEYAPRQERIRDLSGNLWERSSGDGEELERLTKPKSDESDEDTF) the chain is on the cytoplasmic side. Phosphoserine occurs at positions 394, 416, and 419. A disordered region spans residues 397–424 (LWERSSGDGEELERLTKPKSDESDEDTF). Positions 408-417 (LERLTKPKSD) are enriched in basic and acidic residues.

This sequence belongs to the nucleotide-sugar transporter family. SLC35A subfamily. Probably forms homooligomers and heterooligomers with SLC35A1, SLC35A2, SLC35A3 and SLC35A4.

It localises to the golgi apparatus membrane. The enzyme catalyses UMP(out) + UDP-alpha-D-glucuronate(in) = UMP(in) + UDP-alpha-D-glucuronate(out). It carries out the reaction UMP(out) + UDP-N-acetyl-alpha-D-glucosamine(in) = UMP(in) + UDP-N-acetyl-alpha-D-glucosamine(out). The catalysed reaction is UDP-N-acetyl-alpha-D-galactosamine(in) + UMP(out) = UDP-N-acetyl-alpha-D-galactosamine(out) + UMP(in). Probable UDP-sugar:UMP transmembrane antiporter involved in UDP-alpha-D-glucuronate/UDP-GlcA, UDP-GlcNAc/UDP-N-acetyl-alpha-D-glucosamine and UDP-N-acetyl-alpha-D-galactosamine/UDP-GalNAc transport from the cytosol to the lumen of the Golgi. This is UDP-sugar transporter protein SLC35A5 from Homo sapiens (Human).